The chain runs to 277 residues: Probable endonuclease 4 (277 aa).

Zn(2+)-binding residues include H67, H107, E142, D176, H179, H211, D224, H226, and E256.

This sequence belongs to the AP endonuclease 2 family. Zn(2+) serves as cofactor.

The enzyme catalyses Endonucleolytic cleavage to 5'-phosphooligonucleotide end-products.. Its function is as follows. Endonuclease IV plays a role in DNA repair. It cleaves phosphodiester bonds at apurinic or apyrimidinic (AP) sites, generating a 3'-hydroxyl group and a 5'-terminal sugar phosphate. This Clostridium botulinum (strain Alaska E43 / Type E3) protein is Probable endonuclease 4.